The following is a 429-amino-acid chain: Serine carboxypeptidase-like (429 aa).

Cystine bridges form between C58–C298, C226–C241, and C264–C269. N-linked (GlcNAc...) asparagine glycosylation occurs at N76. Residue S148 is part of the active site. D336 is a catalytic residue. C339 is a binding site for substrate. The active site involves H393. 2 N-linked (GlcNAc...) asparagine glycosylation sites follow: N414 and N417.

It belongs to the peptidase S10 family. As to expression, abundant in germinated embryos composed of leaf, root, and scutellum.

This Oryza sativa subsp. japonica (Rice) protein is Serine carboxypeptidase-like (CBP31).